The sequence spans 843 residues: Pullulanase (843 aa).

An N-terminal signal peptide occupies residues 1 to 19; it reads MKTKLWLLLVLLLSALIFS. D535 serves as the catalytic Nucleophile. Catalysis depends on E564, which acts as the Proton donor.

Belongs to the glycosyl hydrolase 13 family.

It catalyses the reaction Hydrolysis of (1-&gt;6)-alpha-D-glucosidic linkages in pullulan, amylopectin and glycogen, and in the alpha- and beta-limit dextrins of amylopectin and glycogen.. This Thermotoga maritima (strain ATCC 43589 / DSM 3109 / JCM 10099 / NBRC 100826 / MSB8) protein is Pullulanase (pulA).